The following is a 196-amino-acid chain: Nucleoid occlusion factor SlmA (196 aa).

One can recognise an HTH tetR-type domain in the interval 6 to 66 (RNRREEILQA…GLIEFVEDTL (61 aa)). The segment at residues 29-48 (TTAKLAANLGVSEAALYRHF) is a DNA-binding region (H-T-H motif). A coiled-coil region spans residues 108 to 135 (DALMGEHDRLRGRMEDLFNRIESSIKQI).

This sequence belongs to the nucleoid occlusion factor SlmA family. As to quaternary structure, homodimer. Interacts with FtsZ.

It localises to the cytoplasm. The protein localises to the nucleoid. In terms of biological role, required for nucleoid occlusion (NO) phenomenon, which prevents Z-ring formation and cell division over the nucleoid. Acts as a DNA-associated cell division inhibitor that binds simultaneously chromosomal DNA and FtsZ, and disrupts the assembly of FtsZ polymers. SlmA-DNA-binding sequences (SBS) are dispersed on non-Ter regions of the chromosome, preventing FtsZ polymerization at these regions. In Idiomarina loihiensis (strain ATCC BAA-735 / DSM 15497 / L2-TR), this protein is Nucleoid occlusion factor SlmA.